The sequence spans 232 residues: Ribonuclease P protein component 3 (232 aa).

It belongs to the eukaryotic/archaeal RNase P protein component 3 family. Consists of a catalytic RNA component and at least 4-5 protein subunits.

It is found in the cytoplasm. It carries out the reaction Endonucleolytic cleavage of RNA, removing 5'-extranucleotides from tRNA precursor.. Functionally, part of ribonuclease P, a protein complex that generates mature tRNA molecules by cleaving their 5'-ends. This chain is Ribonuclease P protein component 3, found in Halobacterium salinarum (strain ATCC 29341 / DSM 671 / R1).